Reading from the N-terminus, the 323-residue chain is Cell division protein ZipA (323 aa).

Topologically, residues 1–5 are periplasmic; it reads MQELR. The chain crosses the membrane as a helical span at residues 6–26; it reads FVLIVVGALAIAALLFHGLWT. At 27–323 the chain is on the cytoplasmic side; the sequence is SKKEGKAKFG…QIVEFNAANA (297 aa). The segment at 35-92 is disordered; that stretch reads FGNKPLGKLDVDQEDKDTPGQERDFAPDPEDDFEIIRKDRKEPDFGMENSFDNKFSSD. Basic and acidic residues-rich tracts occupy residues 41–60 and 68–78; these read GKLDVDQEDKDTPGQERDFA and EIIRKDRKEPD.

This sequence belongs to the ZipA family. In terms of assembly, interacts with FtsZ via their C-terminal domains.

The protein localises to the cell inner membrane. Essential cell division protein that stabilizes the FtsZ protofilaments by cross-linking them and that serves as a cytoplasmic membrane anchor for the Z ring. Also required for the recruitment to the septal ring of downstream cell division proteins. This chain is Cell division protein ZipA, found in Vibrio campbellii (strain ATCC BAA-1116).